Here is a 500-residue protein sequence, read N- to C-terminus: Tektin-like protein 1 (500 aa).

A disordered region spans residues 1–25 (MPVLLPSTDRDQDSRVGAPEWHQAA). Serine 14 bears the Phosphoserine mark. A coiled-coil region spans residues 198–229 (MLVWEREELKSMKRKMEKDMERSEALLKALAS). The interval 265–286 (VDITRPPTPRTQGLKTPPPDPV) is disordered. Phosphotyrosine is present on tyrosine 372. Positions 422–448 (LTRHNLQMEKNLKELRTTHDNLAWSLN) form a coiled coil.

As to quaternary structure, microtubule inner protein component of sperm flagellar doublet microtubules.

Its subcellular location is the cytoplasm. It localises to the cytoskeleton. It is found in the flagellum axoneme. Functionally, microtubule inner protein (MIP) part of the dynein-decorated doublet microtubules (DMTs) in sperm flagellar axoneme, which is required for motile flagellum beating. Forms an extensive interaction network cross-linking the lumen of axonemal doublet microtubules. This chain is Tektin-like protein 1, found in Rattus norvegicus (Rat).